Consider the following 728-residue polypeptide: Polyribonucleotide nucleotidyltransferase (728 aa).

The Mg(2+) site is built by Asp-509 and Asp-515. One can recognise a KH domain in the interval 576 to 638 (TKIYTFYIPK…TKLKIAILKI (63 aa)). Residues 648-715 (GTIYKAKVKN…KFRKIKLSHK (68 aa)) enclose the S1 motif domain.

The protein belongs to the polyribonucleotide nucleotidyltransferase family. The cofactor is Mg(2+).

The protein resides in the cytoplasm. The catalysed reaction is RNA(n+1) + phosphate = RNA(n) + a ribonucleoside 5'-diphosphate. Functionally, involved in mRNA degradation. Catalyzes the phosphorolysis of single-stranded polyribonucleotides processively in the 3'- to 5'-direction. In Karelsulcia muelleri (strain GWSS) (Sulcia muelleri), this protein is Polyribonucleotide nucleotidyltransferase.